A 1182-amino-acid chain; its full sequence is Rho GTPase-activating protein 20 (1182 aa).

Positions Met1 to Leu40 are disordered. At Ser46 the chain carries Phosphoserine. One can recognise a PH domain in the interval Leu86 to Glu187. The Ras-associating domain maps to Lys194–Asp283. The Rho-GAP domain maps to Val365–Phe551. A phosphoserine mark is found at Ser704 and Ser730. 4 disordered regions span residues Lys744–Thr791, Ala932–Asp953, Gln981–Ser1009, and Glu1140–His1182. Residues Phe757 to Glu775 show a composition bias toward polar residues. Low complexity predominate over residues Ser933–Asp953.

Highest expression is found in testis. Ubiquitously expressed in extragonadal tissues.

Functionally, GTPase activator for the Rho-type GTPases by converting them to an inactive GDP-bound state. This Rattus norvegicus (Rat) protein is Rho GTPase-activating protein 20 (Arhgap20).